Consider the following 233-residue polypeptide: Hydroxyacylglutathione hydrolase (233 aa).

Zn(2+) is bound by residues His-52, His-54, Asp-56, His-57, His-108, Asp-125, and His-163.

The protein belongs to the metallo-beta-lactamase superfamily. Glyoxalase II family. In terms of assembly, monomer. Zn(2+) serves as cofactor.

It catalyses the reaction an S-(2-hydroxyacyl)glutathione + H2O = a 2-hydroxy carboxylate + glutathione + H(+). Its pathway is secondary metabolite metabolism; methylglyoxal degradation; (R)-lactate from methylglyoxal: step 2/2. Its function is as follows. Thiolesterase that catalyzes the hydrolysis of S-D-lactoyl-glutathione to form glutathione and D-lactic acid. In Pasteurella multocida (strain Pm70), this protein is Hydroxyacylglutathione hydrolase.